The primary structure comprises 185 residues: MARKNQKAPWEPEEEYILVSKSEMKRDMDALQKLGEELVELKPSVLAKFPISEELLDAIKDAQRFKNEARRRQLQYIGKVMRQEDPEPIQAALDKIRNKHSQNTAVLHKLETLRERIVEQGDSAIDDVVALYPDADRQRLRQLARMATKEKQANKPPKAYREIFQILKQLNDDAVSDSIENELKQ.

The protein belongs to the DarP family.

It localises to the cytoplasm. In terms of biological role, member of a network of 50S ribosomal subunit biogenesis factors which assembles along the 30S-50S interface, preventing incorrect 23S rRNA structures from forming. Promotes peptidyl transferase center (PTC) maturation. The sequence is that of Dual-action ribosomal maturation protein DarP from Vibrio vulnificus (strain YJ016).